The following is a 285-amino-acid chain: Ubiquinone biosynthesis protein COQ4, mitochondrial (285 aa).

The transit peptide at 1–11 (MPPAVRQGMRT) directs the protein to the mitochondrion. Positions 166, 167, 170, and 182 each coordinate Zn(2+).

This sequence belongs to the COQ4 family. Component of a multi-subunit COQ enzyme complex, composed of at least COQ3, COQ4, COQ5, COQ6, COQ7 and COQ9. Requires Zn(2+) as cofactor.

The protein resides in the mitochondrion inner membrane. It carries out the reaction a 4-hydroxy-3-methoxy-5-(all-trans-polyprenyl)benzoate + H(+) = a 2-methoxy-6-(all-trans-polyprenyl)phenol + CO2. It participates in cofactor biosynthesis; ubiquinone biosynthesis. Lyase that catalyzes the C1-decarboxylation of 4-hydroxy-3-methoxy-5-(all-trans-polyprenyl)benzoic acid into 2-methoxy-6-(all-trans-polyprenyl)phenol during ubiquinone biosynthesis. The polypeptide is Ubiquinone biosynthesis protein COQ4, mitochondrial (Paracoccidioides lutzii (strain ATCC MYA-826 / Pb01) (Paracoccidioides brasiliensis)).